Here is a 412-residue protein sequence, read N- to C-terminus: Serine hydroxymethyltransferase (412 aa).

Residues L117 and 121-123 each bind (6S)-5,6,7,8-tetrahydrofolate; that span reads GHL. K226 is modified (N6-(pyridoxal phosphate)lysine). 349–351 is a binding site for (6S)-5,6,7,8-tetrahydrofolate; sequence SPF.

It belongs to the SHMT family. In terms of assembly, homodimer. Pyridoxal 5'-phosphate serves as cofactor.

Its subcellular location is the cytoplasm. It catalyses the reaction (6R)-5,10-methylene-5,6,7,8-tetrahydrofolate + glycine + H2O = (6S)-5,6,7,8-tetrahydrofolate + L-serine. It functions in the pathway one-carbon metabolism; tetrahydrofolate interconversion. Its pathway is amino-acid biosynthesis; glycine biosynthesis; glycine from L-serine: step 1/1. Catalyzes the reversible interconversion of serine and glycine with tetrahydrofolate (THF) serving as the one-carbon carrier. This reaction serves as the major source of one-carbon groups required for the biosynthesis of purines, thymidylate, methionine, and other important biomolecules. Also exhibits THF-independent aldolase activity toward beta-hydroxyamino acids, producing glycine and aldehydes, via a retro-aldol mechanism. This chain is Serine hydroxymethyltransferase, found in Lawsonia intracellularis (strain PHE/MN1-00).